The primary structure comprises 234 residues: Lipoprotein-releasing system ATP-binding protein LolD (234 aa).

Positions Leu-7–Leu-234 constitute an ABC transporter domain. Gly-43 to Ser-50 lines the ATP pocket.

The protein belongs to the ABC transporter superfamily. Lipoprotein translocase (TC 3.A.1.125) family. As to quaternary structure, the complex is composed of two ATP-binding proteins (LolD) and two transmembrane proteins (LolC and LolE).

The protein resides in the cell inner membrane. Part of the ABC transporter complex LolCDE involved in the translocation of mature outer membrane-directed lipoproteins, from the inner membrane to the periplasmic chaperone, LolA. Responsible for the formation of the LolA-lipoprotein complex in an ATP-dependent manner. The protein is Lipoprotein-releasing system ATP-binding protein LolD of Photorhabdus laumondii subsp. laumondii (strain DSM 15139 / CIP 105565 / TT01) (Photorhabdus luminescens subsp. laumondii).